A 1367-amino-acid polypeptide reads, in one-letter code: MAPPRKRTRDLMPKFLNTESFDEFNQRLNNLPAESNVTSDEDAQFLESRKCQSKRWRKEEPLKLNLRSPWNVLCSPESISSAKFIVEKTCLIPVPSFEEAATNARRCLNTSSIPGSSGSASETNSGSDITKQDFKNDSPSDSKKVQGSSTSKSAKPKVIKVYSFVDLVTTTKKGNIQTEESSLNHEKKLGTVVDIVEPMKCDERSKEVQGSSTSKSAKPKVIKVYSFADVVTTTKKGNIQTEESSLNHEKKLGTVVDIIEPMKCDERSKEVQGSSTSKSAKLKVIKVYSFADVVTTTKKGNIQTEESSLNHEKKLGTVVDIVEPMKCDERSKEVQGSSTSKSEKPKVIKVYSFADVVTTTKKGNIQTEESSLNHEKKLGTVVDIVEPMKCDEGTKCEVTTTNKGKIHTEERSLNHEKKLGTVVDIVEPMKCDEGSKCEVTTTNKGNTQTEERSLNHEKKLGIGVDIVEPMKCDEGTKCEVTTTNKGKIQTEERSLNYEKKLGIGVDIVEPMKCDEENKCEVNADTFDVVIVEPMKCNKVTKCEVNVDTTGVNIVEPMKCNEVTKCEVNVDTIGVDIVEPMKCNEESKCEVNADTMSLQKRSKRAVSLVERFTEEEIKLHIMSLKKPSTQSAVEGMCDLKEEEESCQLCDDGTLLFPPQPLYCLLCSRRIDDRSFYYTPGEEELSNAQHQICSPCHSRCKTKFPLCGVFIDKHKMLKRSNFDNADTEEWVQCESCEKWQHQICGLYNKLKDEDKTAEYICPTCLLEECQSINNMALVDYTDSGAKDLPETVLSYFLEQRLFKRLKEERYQTAKATGKSINDVPEPEGLTLRVVFSADRTLTVNKQFASLLHKENFPSEFPYRSKVILLFQKVHGVDICIFALFVQEFGSECSQPNQRSTYIFYLDSVKYFKPERVTFAGEALRTFVYHEVLIGYLEYCKLRGFTTSYIWACPPKIGQDYIMYSHPKTQQTPDTKKLRKWYVSMLQKAAEQRVVMNVTNLYDRFFDSTEEYMTAARLPYFEGSFWSNRAEIMIQDIEREGNNELQKKVKLLSRRKVKTMSYKTTGDVDVDDVKNILLMEKLEKEVFPNKKDLMVVELNYSCTRCSKAVLSGLRWFCEKCKNLHLCESCYDAGQELPGEHIYKRMDKEKHQLSKVQVNGVLFSTTEDNDIIQENDMFESRQAFLAFSQKHNYNFHTLRHAKHSSMMILHHLHTSNKHHCSQNSSSLTCTACKKDVSTTIYFPCLLCPDYRACTGCYTKNRTLRHLHIFPTLPSANRAPSRTVMVLEILNAISHALLCQHKTTKSCSYPKCHEVKALFTHNVQCKIRKKGTRCNTCYKLWQTIRIHVYHCQDLNCPVPQCRDRKEVLIRKV.

Residues 110 to 151 are disordered; the sequence is TSSIPGSSGSASETNSGSDITKQDFKNDSPSDSKKVQGSSTS. Residues 111–127 show a composition bias toward low complexity; the sequence is SSIPGSSGSASETNSGS. Residues 130-144 are compositionally biased toward basic and acidic residues; sequence TKQDFKNDSPSDSKK. 12 tandem repeats follow at residues 188 to 200, 223 to 235, 251 to 263, 286 to 298, 314 to 326, 349 to 361, 377 to 389, 418 to 430, 432 to 444, 459 to 471, 473 to 485, and 500 to 512. The tract at residues 188 to 512 is 12 X 13 AA approximate repeats; that stretch reads KLGTVVDIVE…IGVDIVEPMK (325 aa). The PHD-type zinc-finger motif lies at 688-765; that stretch reads HQICSPCHSR…EYICPTCLLE (78 aa). The region spanning 780-1213 is the CBP/p300-type HAT domain; that stretch reads DSGAKDLPET…ILHHLHTSNK (434 aa). Acetyl-CoA-binding positions include 903-905, 922-923, and tryptophan 978; these read LDS and RT. The ZZ-type 1; degenerate zinc-finger motif lies at 1094–1157; that stretch reads ELNYSCTRCS…QLSKVQVNGV (64 aa). Positions 1099, 1102, 1123, 1126, 1225, 1228, 1240, 1243, 1249, 1252, 1261, and 1263 each coordinate Zn(2+). Residues 1220–1273 form a ZZ-type 2 zinc finger; that stretch reads SSSLTCTACKKDVSTTIYFPCLLCPDYRACTGCYTKNRTLRHLHIFPTLPSANR. The TAZ-type zinc-finger motif lies at 1274–1359; it reads APSRTVMVLE…NCPVPQCRDR (86 aa).

As to expression, rosette leaves, stems and flowers.

Its subcellular location is the nucleus. It catalyses the reaction L-lysyl-[protein] + acetyl-CoA = N(6)-acetyl-L-lysyl-[protein] + CoA + H(+). Acetyltransferase enzyme. Acetylates histones, giving a specific tag for transcriptional activation. No acetyltransferase activity found in vitro. This chain is Histone acetyltransferase HAC2 (HAC2), found in Arabidopsis thaliana (Mouse-ear cress).